The chain runs to 432 residues: Glyceraldehyde-3-phosphate dehydrogenase, testis-specific (432 aa).

The tract at residues 1 to 97 is testis-specific N-terminal extension; that stretch reads MSRRDVVLTN…PPPPPPPKPA (97 aa). A disordered region spans residues 40 to 101; it reads PPPPKVEEPP…PPPKPAKELT (62 aa). The segment covering 44-55 has biased composition (basic and acidic residues); sequence KVEEPPPPKEEP. Pro residues-rich tracts occupy residues 56–67 and 75–95; these read PPPPPPPPPPQI and APPP…PPPK. Residues 109–110, Asp130, Lys175, Tyr197, and Thr217 contribute to the NAD(+) site; that span reads RI. D-glyceraldehyde 3-phosphate is bound by residues 247–249, Thr278, 307–308, and Arg330; these read SCT and TG. Catalysis depends on Cys248, which acts as the Nucleophile. Position 350 is a phosphoserine (Ser350). Asn412 lines the NAD(+) pocket.

The protein belongs to the glyceraldehyde-3-phosphate dehydrogenase family. As to quaternary structure, homotetramer. In terms of tissue distribution, expressed in both head and flagellum of epididymal sperm.

It is found in the cytoplasm. The catalysed reaction is D-glyceraldehyde 3-phosphate + phosphate + NAD(+) = (2R)-3-phospho-glyceroyl phosphate + NADH + H(+). It participates in carbohydrate degradation; glycolysis; pyruvate from D-glyceraldehyde 3-phosphate: step 1/5. Its function is as follows. May play an important role in regulating the switch between different pathways for energy production during spermiogenesis and in the spermatozoon. Required for sperm motility and male fertility. The protein is Glyceraldehyde-3-phosphate dehydrogenase, testis-specific (Gapdhs) of Rattus norvegicus (Rat).